Reading from the N-terminus, the 387-residue chain is MTSHPVFIDLSLDEQVQELRKYFKKLGAEISSEKSNKGVEDDLHKIIGVCDVCFKDGEPSQIDGILNSIVSIMITIPLDRGENIVLAYCEKMTKAPNLPLGKVCLQSLWRLFNNLDTASPLRYHVYYHLVQVAKQCEQVLEVFSGVDQLKSQFANCPPSSEQMQKLYRLLHDVTKDTNLELSSKVMIELLGTYTADNACVAREDAMKCIVTALADPNTFLLDPLLSLKPVRFLEGDLIHDLLSIFVSEKLPAYVQFYEDHREFVNSQGLNHEQNMKKMRLLTFMQLAESSPEMTFETLTKELQINEDEVEPFVIEVLKTKLVRARLDQANQKVHISSTMHRTFGAPQWEQLRDLLQAWKENLSTVREGLTSVSSAQLDLARSQKLIH.

The PCI domain occupies 181 to 340; it reads LSSKVMIELL…QKVHISSTMH (160 aa).

The protein belongs to the eIF-3 subunit M family. In terms of assembly, component of the eukaryotic translation initiation factor 3 (eIF-3) complex. The eIF-3 complex interacts with pix.

The protein resides in the cytoplasm. It localises to the golgi apparatus. In terms of biological role, component of the eukaryotic translation initiation factor 3 (eIF-3) complex, which is involved in protein synthesis of a specialized repertoire of mRNAs and, together with other initiation factors, stimulates binding of mRNA and methionyl-tRNAi to the 40S ribosome. The eIF-3 complex specifically targets and initiates translation of a subset of mRNAs involved in cell proliferation. This Drosophila sechellia (Fruit fly) protein is Eukaryotic translation initiation factor 3 subunit M.